An 876-amino-acid polypeptide reads, in one-letter code: Leucine--tRNA ligase (876 aa).

Positions 42–52 (PYPSGKLHMGH) match the 'HIGH' region motif. The short motif at 634-638 (KMSKS) is the 'KMSKS' region element. Position 637 (lysine 637) interacts with ATP.

This sequence belongs to the class-I aminoacyl-tRNA synthetase family.

It localises to the cytoplasm. The enzyme catalyses tRNA(Leu) + L-leucine + ATP = L-leucyl-tRNA(Leu) + AMP + diphosphate. The polypeptide is Leucine--tRNA ligase (Neisseria meningitidis serogroup C (strain 053442)).